The following is a 51-amino-acid chain: Protein I177L (51 aa).

Asn11 carries an N-linked (GlcNAc...) asparagine; by host glycan.

It belongs to the asfivirus I177L family.

Its subcellular location is the virion. The sequence is that of Protein I177L from Ornithodoros (relapsing fever ticks).